Consider the following 623-residue polypeptide: Kelch-like protein diablo (623 aa).

The disordered stretch occupies residues 1–54; it reads MGDLPGSGSTAQPRDAAVTGTGGNSTAGGGSSVGSTAVDRPPSPARLSHTSEKH. Residue threonine 19 is modified to Phosphothreonine. Residues 20 to 32 show a composition bias toward gly residues; it reads GTGGNSTAGGGSS. The BTB domain occupies 72–139; the sequence is CDVVLNVGGR…CYTAHIIVEE (68 aa). Residues 174–276 enclose the BACK domain; the sequence is CLGIRAFADT…SPKFLVGTVG (103 aa). 6 Kelch repeats span residues 323 to 369, 371 to 417, 418 to 464, 466 to 511, 513 to 558, and 559 to 605; these read VLFA…VLND, LYAV…VLDG, FLYA…VLGG, LYAI…VFNN, IYAV…VVNG, and QLYA…VMRA.

It participates in protein modification; protein ubiquitination. Functionally, probable substrate-specific adapter of an E3 ubiquitin-protein ligase complex which mediates the ubiquitination and subsequent proteasomal degradation of target proteins. May have a role in synapse differentiation and growth. The protein is Kelch-like protein diablo of Drosophila melanogaster (Fruit fly).